Reading from the N-terminus, the 443-residue chain is D(2) dopamine receptor (443 aa).

Over 1 to 37 (MDPLNLSWYDDDLESQNWSRPFNGSEGKPGKPHYNYY) the chain is Extracellular. Asn-5, Asn-17, and Asn-23 each carry an N-linked (GlcNAc...) asparagine glycan. A helical transmembrane segment spans residues 38–60 (AMLLTLLIFIIVFGNVLVCMAVS). The Cytoplasmic portion of the chain corresponds to 61–70 (REKALQTTTN). Residues 71 to 93 (YLIVSLAVADLLVATLVMPWVVY) traverse the membrane as a helical segment. The Extracellular segment spans residues 94–108 (LEVVGEWKFSRIHCD). An intrachain disulfide couples Cys-107 to Cys-182. Residues 109–130 (IFVTLDVMMCTASILNLCAISI) traverse the membrane as a helical segment. At 131–151 (DRYTAVAMPMLYNTRYSSKRR) the chain is on the cytoplasmic side. The chain crosses the membrane as a helical span at residues 152–172 (VTVMIAIVWVLSFTISCPLLF). Residues 173 to 188 (GLNNTDQNECIIANPA) lie on the Extracellular side of the membrane. A helical membrane pass occupies residues 189–213 (FVVYSSIVSFYVPFIVTLLVYIKIY). Positions 211 to 373 (KIYIVLRRRR…SQQKEKKATQ (163 aa)) are interaction with PPP1R9B. Residues 214-373 (IVLRRRRKRV…SQQKEKKATQ (160 aa)) are Cytoplasmic-facing. Positions 282 to 332 (EMLSSTSPPERTRYSPIPPSHHQLTLPDPSHHGLHSTADSPAKPEKNGHAK) are disordered. The segment covering 323–332 (AKPEKNGHAK) has biased composition (basic and acidic residues). Residues 374–395 (MLAIVLGVFIICWLPFFITHIL) form a helical membrane-spanning segment. The Extracellular segment spans residues 396–409 (NIHCECNIPPVLYS). A disulfide bridge links Cys-399 with Cys-401. A helical membrane pass occupies residues 410 to 431 (AFTWLGYVNSAVNPIIYTTFNI). The Cytoplasmic segment spans residues 432–443 (EFRKAFLKILHC). A lipid anchor (S-palmitoyl cysteine) is attached at Cys-443.

This sequence belongs to the G-protein coupled receptor 1 family. In terms of assembly, forms homo- and heterooligomers with DRD4. The interaction with DRD4 may modulate agonist-induced downstream signaling. Interacts with CADPS and CADPS2. Interacts with GPRASP1, PPP1R9B and CLIC6. Interacts with ARRB2. Interacts with HTR2A. Interacts with DRD1. Interacts with KCNA2. Palmitoylated. Palmitoylation which is required for proper localization to the plasma membrane and stability of the receptor could be carried on by ZDHHC4, ZDHHC3 and ZDHHC8.

The protein resides in the cell membrane. It localises to the golgi apparatus membrane. Dopamine receptor whose activity is mediated by G proteins which inhibit adenylyl cyclase. Positively regulates postnatal regression of retinal hyaloid vessels via suppression of VEGFR2/KDR activity, downstream of OPN5. The protein is D(2) dopamine receptor (DRD2) of Canis lupus familiaris (Dog).